A 935-amino-acid polypeptide reads, in one-letter code: Dual 3',5'-cyclic-AMP and -GMP phosphodiesterase 11A (935 aa).

The tract at residues 41-125 is disordered; that stretch reads RHSSGQGASD…ASQKELRKSF (85 aa). A compositionally biased stretch (low complexity) spans 54–69; that stretch reads ALAGASSLAQSSARGS. 3 positions are modified to phosphoserine: serine 162, serine 163, and serine 239. GAF domains are found at residues 217–370 and 402–558; these read DLTS…GIAI and DLEK…GLGI. Serine 424 serves as a coordination point for 3',5'-cyclic GMP. The PDEase domain maps to 588–912; sequence SKAEVDKFKA…RKWEELHQKR (325 aa). Histidine 664 acts as the Proton donor in catalysis. Histidine 668, histidine 704, aspartate 705, and aspartate 816 together coordinate a divalent metal cation. A disordered region spans residues 915–935; sequence VSAASPVPSSPSPAVAGEDRL.

Belongs to the cyclic nucleotide phosphodiesterase family. The cofactor is a divalent metal cation. As to expression, isoform 1 is expressed in brain, heart, kidney and liver, but not in prostate. Isoform 2 is specifically expressed in testis. Isoform 3 is expressed in various tissues including brain, lung, skeletal muscle, spleen, testis and prostate.

It localises to the cytoplasm. The protein resides in the cytosol. The enzyme catalyses 3',5'-cyclic GMP + H2O = GMP + H(+). It catalyses the reaction 3',5'-cyclic AMP + H2O = AMP + H(+). With respect to regulation, inhibited by 3-isobutyl-1-methylxanthine (IBMX), zaprinast and dipyridamole. cGMP acts as an allosteric activator. Its function is as follows. Plays a role in signal transduction by regulating the intracellular concentration of cyclic nucleotides cAMP and cGMP. Catalyzes the hydrolysis of both cAMP and cGMP to 5'-AMP and 5'-GMP, respectively. This chain is Dual 3',5'-cyclic-AMP and -GMP phosphodiesterase 11A, found in Rattus norvegicus (Rat).